The chain runs to 275 residues: MASLQTQMISFYAIFLSILLTTILFFKVNSTETTSFLITKFSPDQQNLIFQGDGYTTKEKLTLTKAVKNTVGRALYSSPIHIWDRETGNVANFVTSFTFVINAPNSYNVADGFTFFIAPVDTKPQTGGGYLGVFNSAEYDKTTQTVAVEFDTFYNAAWDPSNRDRHIGIDVNSIKSVNTKSWKLQNGEEANVVIAFNAATNVLTVSLTYPNSLEEENVTSYTLSDVVSLKDVVPEWVRIGFSATTGAEYAAHEVLSWSFHSELSGTSSSKQAADA.

Residues 1-30 (MASLQTQMISFYAIFLSILLTTILFFKVNS) form the signal peptide. Residues Glu-149 and Asp-151 each contribute to the Mn(2+) site. 4 residues coordinate Ca(2+): Asp-151, Phe-153, Asn-155, and Asp-159. Asp-159 and His-166 together coordinate Mn(2+). The N-linked (GlcNAc...) asparagine glycan is linked to Asn-217.

Belongs to the leguminous lectin family. Tetramer of two alpha and two beta chains.

Functionally, D-mannose specific lectin. This is Lectin (LECA) from Pisum sativum (Garden pea).